We begin with the raw amino-acid sequence, 178 residues long: Inner membrane-spanning protein YciB (178 aa).

5 consecutive transmembrane segments (helical) span residues Ile-22–Leu-42, Met-50–Asn-70, Trp-76–Met-96, Ile-121–Leu-141, and Phe-149–Ile-169.

The protein belongs to the YciB family.

The protein localises to the cell inner membrane. Its function is as follows. Plays a role in cell envelope biogenesis, maintenance of cell envelope integrity and membrane homeostasis. The chain is Inner membrane-spanning protein YciB from Erwinia tasmaniensis (strain DSM 17950 / CFBP 7177 / CIP 109463 / NCPPB 4357 / Et1/99).